Here is a 130-residue protein sequence, read N- to C-terminus: Organ-specific protein P4 (130 aa).

Repeat copies occupy residues 60–85 (HAKE…DNEI) and 86–111 (HANE…DNEI). Residues 60–111 (HAKENKGAIGEFEPCPNASAYGDNEIHANENKGAIGEFETRPNGSAYGDNEI) are 2 X 26 AA tandem repeats. Residues 79–130 (AYGDNEIHANENKGAIGEFETRPNGSAYGDNEIGAEFTDDFEPRPSMTKYNA) are disordered.

To organ specific protein S2. As to expression, expressed in pods.

The sequence is that of Organ-specific protein P4 from Pisum sativum (Garden pea).